The following is an 841-amino-acid chain: Rho guanine nucleotide exchange factor 15 (841 aa).

Disordered regions lie at residues 1–179 (MSAQ…QARA), 239–261 (RRAS…HPAV), and 279–333 (KPPK…REEE). Residues 39–53 (NGSSPQELPRNSNDA) are compositionally biased toward polar residues. Over residues 65 to 110 (PPAASLKPPALLPPSASRASLDSQTSPDSPSSTPTPSPVSRRSASP) the composition is skewed to low complexity. 2 positions are modified to phosphoserine: Ser107 and Ser109. Pro residues predominate over residues 111–124 (EPAPRSPVPPPKPS). Position 353 is a phosphotyrosine; by EPHB2 (Tyr353). In terms of domain architecture, DH spans 417 to 601 (RMQESLFEVV…SKIIERCSAE (185 aa)). Positions 765-793 (ESSAPAKTEGRSLESRAAPKHLHKTPEGW) are disordered.

In terms of assembly, interacts with EPHB2. Interacts with EPHA4. In terms of processing, phosphorylated on tyrosine residues upon EFNA1 stimulation. EPHB2-dependent phosphorylation at Tyr-353 triggers UBE3A-mediated ubiquitination. Ubiquitinated; UBE3A-mediated ubiquitination and degradation by the proteasome promotes EFNB1-dependent synapse formation. As to expression, expressed in the vascular smooth muscle of coronary artery.

It localises to the cell projection. Its subcellular location is the dendrite. In terms of biological role, specific GEF for RhoA activation. Does not activate RAC1 or CDC42. Regulates vascular smooth muscle contractility. Negatively regulates excitatory synapse development by suppressing the synapse-promoting activity of EPHB2. The polypeptide is Rho guanine nucleotide exchange factor 15 (ARHGEF15) (Homo sapiens (Human)).